The following is a 281-amino-acid chain: Undecaprenyl-diphosphatase (281 aa).

8 helical membrane-spanning segments follow: residues 1 to 21 (MNVL…FLPI), 45 to 65 (WTAF…IYFA), 93 to 113 (SKLG…GLVF), 125 to 145 (LIVI…SEVV), 155 to 175 (ISWL…VPGA), 195 to 215 (AARF…LLEF), 227 to 247 (FLVL…TIAF), and 256 to 276 (STNV…WMVF).

It belongs to the UppP family.

It localises to the cell inner membrane. It carries out the reaction di-trans,octa-cis-undecaprenyl diphosphate + H2O = di-trans,octa-cis-undecaprenyl phosphate + phosphate + H(+). In terms of biological role, catalyzes the dephosphorylation of undecaprenyl diphosphate (UPP). Confers resistance to bacitracin. This chain is Undecaprenyl-diphosphatase, found in Syntrophobacter fumaroxidans (strain DSM 10017 / MPOB).